Reading from the N-terminus, the 300-residue chain is MTTTLTPPSSRREDGDGSVQVHQDASLKIEEGALVIAVYGKGGIGKSTTSSNLSAAFSKLGKRVLQIGCDPKHDSTFTLTHKMVPTVIDILEEVDFHSEELQPEDFVFEGFNGVMCVESGGPPAGTGCGGYVTGQTVKLLKEHHLLEDTDVVIFDVLGDVVCGGFAAPLQHANYCLIVTANDFDSIFAMNRIVQAIQAKAKNYKVRLGGVVANRSAETDQIDKFNERTGLRTMAHFRDVDAIRRSRLKKCTIFEMDKDEEGVEAVQNEYLLLAQNMLDHVEPLEAESLKDREIFDLLGFD.

ATP contacts are provided by residues 43-48 (GIGKST) and Lys-72. Ser-47 is a binding site for Mg(2+). [4Fe-4S] cluster-binding residues include Cys-128 and Cys-162. 213 to 214 (NR) serves as a coordination point for ATP.

It belongs to the NifH/BchL/ChlL family. In terms of assembly, homodimer. Protochlorophyllide reductase is composed of three subunits; ChlL, ChlN and ChlB. The cofactor is [4Fe-4S] cluster.

It catalyses the reaction chlorophyllide a + oxidized 2[4Fe-4S]-[ferredoxin] + 2 ADP + 2 phosphate = protochlorophyllide a + reduced 2[4Fe-4S]-[ferredoxin] + 2 ATP + 2 H2O. It participates in porphyrin-containing compound metabolism; chlorophyll biosynthesis (light-independent). Functionally, component of the dark-operative protochlorophyllide reductase (DPOR) that uses Mg-ATP and reduced ferredoxin to reduce ring D of protochlorophyllide (Pchlide) to form chlorophyllide a (Chlide). This reaction is light-independent. The L component serves as a unique electron donor to the NB-component of the complex, and binds Mg-ATP. The chain is Light-independent protochlorophyllide reductase iron-sulfur ATP-binding protein from Synechococcus sp. (strain RCC307).